We begin with the raw amino-acid sequence, 311 residues long: Oxidoreductase NAD-binding domain-containing protein 1 (311 aa).

The N-terminal stretch at 1 to 17 (MACAAVMIPGLLRCSVG) is a signal peptide. The region spanning 50 to 186 (HMERTASVLR…GGVGINPLLS (137 aa)) is the FAD-binding FR-type domain. An NAD(+)-binding site is contributed by 178–183 (GVGINP).

This chain is Oxidoreductase NAD-binding domain-containing protein 1 (OXNAD1), found in Pongo abelii (Sumatran orangutan).